The primary structure comprises 244 residues: rRNA adenine N-6-methyltransferase (244 aa).

Positions 11, 13, 38, 59, 84, and 101 each coordinate S-adenosyl-L-methionine.

It belongs to the class I-like SAM-binding methyltransferase superfamily. rRNA adenine N(6)-methyltransferase family.

The catalysed reaction is adenosine(2085) in 23S rRNA + 2 S-adenosyl-L-methionine = N(6)-dimethyladenosine(2085) in 23S rRNA + 2 S-adenosyl-L-homocysteine + 2 H(+). Functionally, this protein produces a dimethylation of the adenine residue at position 2085 in 23S rRNA, resulting in reduced affinity between ribosomes and macrolide-lincosamide-streptogramin B antibiotics. The sequence is that of rRNA adenine N-6-methyltransferase (ermC) from Staphylococcus aureus.